Here is a 148-residue protein sequence, read N- to C-terminus: Large ribosomal subunit protein bL9 (148 aa).

The protein belongs to the bacterial ribosomal protein bL9 family.

Functionally, binds to the 23S rRNA. This is Large ribosomal subunit protein bL9 from Ectopseudomonas mendocina (strain ymp) (Pseudomonas mendocina).